We begin with the raw amino-acid sequence, 1089 residues long: Platelet-derived growth factor receptor alpha (1089 aa).

Positions 1 to 23 are cleaved as a signal peptide; sequence MGTSHPAFLVLGCLLTGLSLILC. 5 consecutive Ig-like C2-type domains span residues 24-113, 117-201, 202-306, 319-410, and 414-517; these read QLSL…NELE, IYIY…FQTI, PFNV…KKVT, PTFS…FELL, and PSSI…LKLV. Residues 24 to 528 lie on the Extracellular side of the membrane; sequence QLSLPSILPN…PTLRSELTVA (505 aa). N-linked (GlcNAc...) asparagine glycosylation is found at Asn-42, Asn-76, Asn-103, and Asn-179. The cysteines at positions 49 and 100 are disulfide-linked. Cystine bridges form between Cys-150–Cys-189 and Cys-235–Cys-290. Asn-353, Asn-359, Asn-458, and Asn-468 each carry an N-linked (GlcNAc...) asparagine glycan. A disulfide bond links Cys-435 and Cys-501. The chain crosses the membrane as a helical span at residues 529 to 549; it reads AAVLVLLVIVIISLIVLVVIW. Topologically, residues 550 to 1089 are cytoplasmic; that stretch reads KQKPRYEIRW…SSDLVEDSFL (540 aa). Tyr-572 and Tyr-574 each carry phosphotyrosine; by autocatalysis. Residues 593-954 form the Protein kinase domain; it reads LVLGRVLGSG…HLSEIVENLL (362 aa). Residues 599-607 and Lys-627 each bind ATP; that span reads LGSGAFGKV. 6 positions are modified to phosphotyrosine; by autocatalysis: Tyr-720, Tyr-731, Tyr-742, Tyr-754, Tyr-762, and Tyr-768. Asp-818 (proton acceptor) is an active-site residue. 3 positions are modified to phosphotyrosine; by autocatalysis: Tyr-849, Tyr-988, and Tyr-1018. The interval 1018 to 1089 is disordered; it reads YIIPLPDIDP…SSDLVEDSFL (72 aa). A compositionally biased stretch (polar residues) spans 1041 to 1059; that stretch reads SSQTSEESAIETGSSSSTF. Positions 1065–1089 are enriched in acidic residues; the sequence is ETIEDIDMMDDIGIDSSDLVEDSFL.

This sequence belongs to the protein kinase superfamily. Tyr protein kinase family. CSF-1/PDGF receptor subfamily. Interacts with homodimeric PDGFA, PDGFB and PDGFC, and with heterodimers formed by PDGFA and PDGFB. Monomer in the absence of bound ligand. Interaction with dimeric PDGFA, PDGFB and/or PDGFC leads to receptor dimerization, where both PDGFRA homodimers and heterodimers with PDGFRB are observed. Interacts (tyrosine phosphorylated) with SHB (via SH2 domain). Interacts (tyrosine phosphorylated) with SHF (via SH2 domain). Interacts (tyrosine phosphorylated) with SRC (via SH2 domain). Interacts (tyrosine phosphorylated) with PIK3R1. Interacts (tyrosine phosphorylated) with PLCG1 (via SH2 domain). Interacts (tyrosine phosphorylated) with CRK, GRB2 and GRB7. Interacts with CD248; this interaction promotes PDGF receptor signaling pathway. As to quaternary structure, (Microbial infection) Interacts with human cytomegalovirus/HHV-5 envelope glycoprotein B/gB. Also interacts with the trimeric complex gH-gL-gO. Trimer-PDGFRA interaction has an inhibitory effect on PDGFRA signaling. Post-translationally, N-glycosylated. In terms of processing, ubiquitinated, leading to its internalization and degradation. Autophosphorylated on tyrosine residues upon ligand binding. Autophosphorylation occurs in trans, i.e. one subunit of the dimeric receptor phosphorylates tyrosine residues on the other subunit. Phosphorylation at Tyr-731 and Tyr-742 is important for interaction with PIK3R1. Phosphorylation at Tyr-720 and Tyr-754 is important for interaction with PTPN11. Phosphorylation at Tyr-762 is important for interaction with CRK. Phosphorylation at Tyr-572 and Tyr-574 is important for interaction with SRC and SRC family members. Phosphorylation at Tyr-988 and Tyr-1018 is important for interaction with PLCG1. In terms of tissue distribution, detected in platelets (at protein level). Widely expressed. Detected in brain, fibroblasts, smooth muscle, heart, and embryo. Expressed in primary and metastatic colon tumors and in normal colon tissue.

The protein resides in the cell membrane. It is found in the cell projection. Its subcellular location is the cilium. It localises to the golgi apparatus. The enzyme catalyses L-tyrosyl-[protein] + ATP = O-phospho-L-tyrosyl-[protein] + ADP + H(+). Its activity is regulated as follows. Present in an inactive conformation in the absence of bound ligand. Binding of PDGFA and/or PDGFB leads to dimerization and activation by autophosphorylation on tyrosine residues. Inhibited by imatinib, nilotinib and sorafenib. In terms of biological role, tyrosine-protein kinase that acts as a cell-surface receptor for PDGFA, PDGFB and PDGFC and plays an essential role in the regulation of embryonic development, cell proliferation, survival and chemotaxis. Depending on the context, promotes or inhibits cell proliferation and cell migration. Plays an important role in the differentiation of bone marrow-derived mesenchymal stem cells. Required for normal skeleton development and cephalic closure during embryonic development. Required for normal development of the mucosa lining the gastrointestinal tract, and for recruitment of mesenchymal cells and normal development of intestinal villi. Plays a role in cell migration and chemotaxis in wound healing. Plays a role in platelet activation, secretion of agonists from platelet granules, and in thrombin-induced platelet aggregation. Binding of its cognate ligands - homodimeric PDGFA, homodimeric PDGFB, heterodimers formed by PDGFA and PDGFB or homodimeric PDGFC -leads to the activation of several signaling cascades; the response depends on the nature of the bound ligand and is modulated by the formation of heterodimers between PDGFRA and PDGFRB. Phosphorylates PIK3R1, PLCG1, and PTPN11. Activation of PLCG1 leads to the production of the cellular signaling molecules diacylglycerol and inositol 1,4,5-trisphosphate, mobilization of cytosolic Ca(2+) and the activation of protein kinase C. Phosphorylates PIK3R1, the regulatory subunit of phosphatidylinositol 3-kinase, and thereby mediates activation of the AKT1 signaling pathway. Mediates activation of HRAS and of the MAP kinases MAPK1/ERK2 and/or MAPK3/ERK1. Promotes activation of STAT family members STAT1, STAT3 and STAT5A and/or STAT5B. Receptor signaling is down-regulated by protein phosphatases that dephosphorylate the receptor and its down-stream effectors, and by rapid internalization of the activated receptor. This is Platelet-derived growth factor receptor alpha (PDGFRA) from Homo sapiens (Human).